Consider the following 1816-residue polypeptide: Kinesin-like protein KIF1B (1816 aa).

Position 2 is an N-acetylserine (S2). The Kinesin motor domain occupies 5-354 (SVKVAVRVRP…LRYADRAKQI (350 aa)). ATP is bound at residue 97 to 104 (GQTGAGKS). Positions 270 to 350 (NINKSLTTLG…TLSTLRYADR (81 aa)) are interaction with KIFBP. Coiled coils occupy residues 365–386 (NAKL…LRAQ) and 470–502 (GEEA…EAIR). An FHA domain is found at 556–612 (TRVGQADAERRQDIVLSGAHIKEEHCLFRSERSNTGEVIVTLEPCERSETYVNGKRV). 2 positions are modified to phosphothreonine: T647 and T652. 2 coiled-coil regions span residues 668-737 (EKQG…EEEV) and 841-869 (SLDK…AQDD). A phosphoserine mark is found at S1054, S1057, S1416, S1454, and S1487. Residues 1522–1571 (VPKSLSDSLSPSLSSGTLSTSTSISSQISTTTFESAITPSESSGYDSADV) form a disordered region. Over residues 1525 to 1553 (SLSDSLSPSLSSGTLSTSTSISSQISTTT) the composition is skewed to low complexity. Polar residues predominate over residues 1554 to 1566 (FESAITPSESSGY). Phosphoserine occurs at positions 1573, 1603, 1610, and 1613. Residues 1620-1637 (SVSSFSSSTLTPSSTCPS) are compositionally biased toward low complexity. A disordered region spans residues 1620 to 1659 (SVSSFSSSTLTPSSTCPSLVDSRSSSMDQKTPEANSRASS). Residues 1640–1659 (DSRSSSMDQKTPEANSRASS) are compositionally biased toward polar residues. In terms of domain architecture, PH spans 1702–1799 (VSKKGYLHFK…WLYAFNPLLA (98 aa)).

The protein belongs to the TRAFAC class myosin-kinesin ATPase superfamily. Kinesin family. Unc-104 subfamily. As to quaternary structure, monomer. Interacts with KIFBP; positively regulates KIF1B microtubule motor activity. Interacts (via C-terminus end of the kinesin-motor domain) with CHP1; the interaction occurs in a calcium-dependent manner. In terms of assembly, interacts with MADD (via death domain); links this isoform to Rab3-carrying vesicles in anterograde synaptic vesicle transport. Expressed in the brain (at protein level).

It localises to the cytoplasm. The protein resides in the cytoskeleton. The protein localises to the cytoplasmic vesicle. It is found in the secretory vesicle. Its subcellular location is the synaptic vesicle membrane. It localises to the mitochondrion. The catalysed reaction is ATP + H2O + a kinesin associated with a microtubule at position (n) = ADP + phosphate a kinesin associated with a microtubule at position (n+1, toward the plus end).. Its function is as follows. Has a plus-end-directed microtubule motor activity and functions as a motor for transport of vesicles and organelles along microtubules. Has a plus-end-directed microtubule motor activity and functions as a motor for anterograde synaptic vesicle transport along axonal microtubules from the cell body to the presynapse in neuronal cells. Functions as a downstream effector in a developmental apoptotic pathway that is activated when nerve growth factor (NGF) becomes limiting for neuronal progenitor cells. Functionally, has a plus-end-directed microtubule motor activity and functions as a motor for anterograde transport of mitochondria. The polypeptide is Kinesin-like protein KIF1B (Mus musculus (Mouse)).